Consider the following 499-residue polypeptide: Alpha-amylase B (499 aa).

The N-terminal stretch at 1-21 is a signal peptide; it reads MMVAWWSLFLYGLQVAAPALA. A disulfide bond links Cys-51 and Cys-59. Substrate contacts are provided by Gln-56 and Trp-104. Asn-142 provides a ligand contact to Ca(2+). His-143 is a substrate binding site. Cys-171 and Cys-185 are disulfide-bonded. 2 residues coordinate Ca(2+): Glu-183 and Asp-196. N-linked (GlcNAc...) asparagine glycosylation occurs at Asn-218. Residue Arg-225 participates in substrate binding. The Ca(2+) site is built by Asp-227, His-231, and Glu-251. Residue Asp-227 is the Nucleophile of the active site. 230-231 provides a ligand contact to substrate; the sequence is KH. Glu-251 functions as the Proton donor in the catalytic mechanism. A substrate-binding site is contributed by Gly-255. An intrachain disulfide couples Cys-261 to Cys-304. The substrate site is built by Asp-318 and Arg-365. Cysteines 461 and 496 form a disulfide.

It belongs to the glycosyl hydrolase 13 family. The cofactor is Ca(2+).

The enzyme catalyses Endohydrolysis of (1-&gt;4)-alpha-D-glucosidic linkages in polysaccharides containing three or more (1-&gt;4)-alpha-linked D-glucose units.. This chain is Alpha-amylase B (amyB), found in Aspergillus awamori (Black koji mold).